The sequence spans 259 residues: BTB/POZ domain-containing protein KCTD4 (259 aa).

The 102-residue stretch at 33–134 (TLMTLNVGGY…EVKSRWEKEQ (102 aa)) folds into the BTB domain.

The chain is BTB/POZ domain-containing protein KCTD4 (Kctd4) from Mus musculus (Mouse).